The chain runs to 108 residues: Nucleoid-associated protein Csal_1459 (108 aa).

Positions Glu-84–Glu-93 are enriched in basic and acidic residues. Positions Glu-84–Phe-108 are disordered.

It belongs to the YbaB/EbfC family. Homodimer.

The protein resides in the cytoplasm. It is found in the nucleoid. In terms of biological role, binds to DNA and alters its conformation. May be involved in regulation of gene expression, nucleoid organization and DNA protection. In Chromohalobacter salexigens (strain ATCC BAA-138 / DSM 3043 / CIP 106854 / NCIMB 13768 / 1H11), this protein is Nucleoid-associated protein Csal_1459.